Consider the following 729-residue polypeptide: Rho GTPase-activating protein 28 (729 aa).

The interval 1–78 (MEVEDSGGVV…ASVDSSASME (78 aa)) is disordered. A compositionally biased stretch (basic residues) spans 37–49 (LSRKSIPRCRRIN). Low complexity predominate over residues 63–76 (SRSNSQASVDSSAS). Ser70 is modified (phosphoserine). The residue at position 164 (Thr164) is a Phosphothreonine. A disordered region spans residues 180 to 234 (FGVSESPPSDSCEHATQLDGTKEEKDLPGVTKTSRPLPDDASLSSTTLSNGAQDE). The segment covering 221-231 (SLSSTTLSNGA) has biased composition (polar residues). The Rho-GAP domain maps to 384-581 (VPLTVLLDND…LMLKYQKILW (198 aa)).

GTPase activator for the Rho-type GTPases by converting them to an inactive GDP-bound state. In Mus musculus (Mouse), this protein is Rho GTPase-activating protein 28 (Arhgap28).